Here is a 476-residue protein sequence, read N- to C-terminus: Xylan O-acetyltransferase 4 (476 aa).

Positions 1 to 37 are disordered; that stretch reads MTKPQQQSPPSTTATTTTSPPPPPPSTPPPASSSSSS. Residues 1 to 63 are Cytoplasmic-facing; sequence MTKPQQQSPP…SLLSALRRSP (63 aa). Low complexity predominate over residues 8-18; sequence SPPSTTATTTT. Residues 19-31 are compositionally biased toward pro residues; the sequence is SPPPPPPSTPPPA. The chain crosses the membrane as a helical; Signal-anchor for type II membrane protein span at residues 64–80; that stretch reads VTTLVAAFFLLALFMYG. Topologically, residues 81 to 476 are lumenal; sequence EDVRTLAELS…PSPHPPLPPQ (396 aa). Residues Asn103, Asn128, and Asn167 are each glycosylated (N-linked (GlcNAc...) asparagine). 4 cysteine pairs are disulfide-bonded: Cys117–Cys168, Cys139–Cys204, Cys148–Cys444, and Cys360–Cys440. A GDS motif motif is present at residues 191 to 193; sequence GDS. Catalysis depends on Ser193, which acts as the Nucleophile. N-linked (GlcNAc...) asparagine glycosylation is found at Asn299 and Asn369. The active-site Proton donor is Asp439. The short motif at 439–442 is the DXXH motif element; it reads DCIH. Residue His442 is the Proton acceptor of the active site.

It belongs to the PC-esterase family. TBL subfamily. Highly expressed in leaves. Expressed in roots, stems and inflorescences.

Its subcellular location is the golgi apparatus membrane. In terms of biological role, xylan acetyltransferase required for 2-O- and 3-O-monoacetylation of xylosyl residues in xylan. Catalyzes the 2-O-acetylation of xylan, followed by nonenzymatic acetyl migration to the O-3 position, resulting in products that are monoacetylated at both O-2 and O-3 positions. This Oryza sativa subsp. japonica (Rice) protein is Xylan O-acetyltransferase 4.